A 931-amino-acid chain; its full sequence is Aftiphilin (931 aa).

The tract at residues 1–49 (MEPDIIRMYSSSPPPLDNGAEDDEEDEFGEFGGFSEVSPSGVGFVDFDT) is disordered. A compositionally biased stretch (acidic residues) spans 19–29 (GAEDDEEDEFG). A WXXF motif 1 motif is present at residues 28 to 31 (FGEF). Residues 33–45 (GFSEVSPSGVGFV) are compositionally biased toward low complexity. Residue Ser-151 is modified to Phosphoserine. Polar residues predominate over residues 371–381 (SVKTSDVNEIG). The interval 371–454 (SVKTSDVNEI…PFVTSTQDSM (84 aa)) is disordered. Ser-395 carries the post-translational modification Phosphoserine. The short motif at 433 to 436 (FGDF) is the WXXF motif 2 element. The segment covering 439–454 (ANGTTPPFVTSTQDSM) has biased composition (polar residues). The WXXF motif 3 motif lies at 476 to 479 (FGEF). Disordered stretches follow at residues 494-561 (TESD…SSAG) and 599-636 (WQSQRTDETMGTLGTPKMHSVSSAASKGAVASGHLQEP). The span at 516 to 530 (GGKDSKPDSKLKNGQ) shows a compositional bias: basic and acidic residues. Residue Thr-613 is modified to Phosphothreonine. Positions 618–631 (SVSSAASKGAVASG) are enriched in low complexity. A CLTCL1/Clathrin-binding motif is present at residues 712–714 (YQW). The tract at residues 821–825 (LLNLD) is clathrin-binding.

As to quaternary structure, self-associates. Interacts with GGA1 (via GAE domain). Interacts with GGA3 (via GAE domain), AP1G1 (via GAE domain) and AP1G2 (via GAE domain). Component of the aftiphilin/p200/gamma-synergin complex, at least composed of AFTPH/aftiphilin, HEATR5B/p200a and SYNRG/gamma-synergin, which plays a role in the AP1G1/AP-1-mediated protein trafficking from early to recycling endosomes. Within the complex interacts with HEATR5B/p200a and SYNRG/gamma-synergin; the interactions are direct. Interacts with AP1G1/AP-1; the interaction is required to recruit AFTPH/aftiphilin to the perinuclear region of the cell. Interacts with CLTCL1/Clathrin.

The protein resides in the cytoplasm. It is found in the perinuclear region. Its subcellular location is the cytoplasmic vesicle. The protein localises to the clathrin-coated vesicle. In terms of biological role, component of clathrin-coated vesicles. Component of the aftiphilin/p200/gamma-synergin complex, which plays roles in AP1G1/AP-1-mediated protein trafficking including the trafficking of transferrin from early to recycling endosomes, and the membrane trafficking of furin and the lysosomal enzyme cathepsin D between the trans-Golgi network (TGN) and endosomes. In Mus musculus (Mouse), this protein is Aftiphilin (Aftph).